Here is a 108-residue protein sequence, read N- to C-terminus: U-scoloptoxin(16)-Er10a (108 aa).

A signal peptide spans Met1–Ser24.

This sequence belongs to the scoloptoxin-16 family. Contains 4 disulfide bonds. In terms of tissue distribution, expressed by the venom gland.

It localises to the secreted. In Ethmostigmus rubripes (Giant centipede), this protein is U-scoloptoxin(16)-Er10a.